The sequence spans 176 residues: MLFFTLLIQLFLVPVLCQYACSSELKFGTACSENKTSTKWYYDSKLLFCYPYKYLGCGEGSNSFESNENCLESCKPADQFSCGGNTGPDGVCFAHGDQGCKKGTVCVMGGMVGFCCDKKIQDEWNKENSPKCLKGQVVQFKQWFGMTPLIGRSCSHNFCPEKSTCVQGKWTAYCCQ.

Positions methionine 1–cysteine 17 are cleaved as a signal peptide. The BPTI/Kunitz inhibitor domain occupies cysteine 21–cysteine 74. 3 disulfides stabilise this stretch: cysteine 21–cysteine 74, cysteine 31–cysteine 57, and cysteine 49–cysteine 70. A glycan (N-linked (GlcNAc...) asparagine) is linked at asparagine 34.

The protein is BPTI/Kunitz inhibitor domain-containing protein C02F12.5 of Caenorhabditis elegans.